The following is a 169-amino-acid chain: Large ribosomal subunit protein uL5 (169 aa).

This sequence belongs to the universal ribosomal protein uL5 family. As to quaternary structure, part of the 50S ribosomal subunit; contacts the 5S rRNA and probably tRNA. Forms a bridge to the 30S subunit in the 70S ribosome.

Its function is as follows. This is one of the proteins that bind and probably mediate the attachment of the 5S RNA into the large ribosomal subunit, where it forms part of the central protuberance. In the 70S ribosome it contacts protein S13 of the 30S subunit (bridge B1b), connecting the 2 subunits; this bridge is implicated in subunit movement. May contact the P site tRNA; the 5S rRNA and some of its associated proteins might help stabilize positioning of ribosome-bound tRNAs. This chain is Large ribosomal subunit protein uL5, found in Methanosarcina barkeri (strain Fusaro / DSM 804).